Reading from the N-terminus, the 369-residue chain is Carbamoyl phosphate synthase small chain (369 aa).

The CPSase stretch occupies residues 1 to 168 (MYGILVLEDG…KKVVKYPAKD (168 aa)). L-glutamine is bound by residues Ser45, Gly220, and Gly222. Residues 172–364 (SCVVIDCGVK…VALGMKFKQE (193 aa)) enclose the Glutamine amidotransferase type-1 domain. Cys247 (nucleophile) is an active-site residue. Positions 248, 251, 289, 291, and 292 each coordinate L-glutamine. Residues His337 and Glu339 contribute to the active site.

The protein belongs to the CarA family. Composed of two chains; the small (or glutamine) chain promotes the hydrolysis of glutamine to ammonia, which is used by the large (or ammonia) chain to synthesize carbamoyl phosphate. Tetramer of heterodimers (alpha,beta)4.

It carries out the reaction hydrogencarbonate + L-glutamine + 2 ATP + H2O = carbamoyl phosphate + L-glutamate + 2 ADP + phosphate + 2 H(+). The enzyme catalyses L-glutamine + H2O = L-glutamate + NH4(+). Its pathway is amino-acid biosynthesis; L-arginine biosynthesis; carbamoyl phosphate from bicarbonate: step 1/1. It participates in pyrimidine metabolism; UMP biosynthesis via de novo pathway; (S)-dihydroorotate from bicarbonate: step 1/3. Small subunit of the glutamine-dependent carbamoyl phosphate synthetase (CPSase). CPSase catalyzes the formation of carbamoyl phosphate from the ammonia moiety of glutamine, carbonate, and phosphate donated by ATP, constituting the first step of 2 biosynthetic pathways, one leading to arginine and/or urea and the other to pyrimidine nucleotides. The small subunit (glutamine amidotransferase) binds and cleaves glutamine to supply the large subunit with the substrate ammonia. This chain is Carbamoyl phosphate synthase small chain, found in Methanococcus vannielii (strain ATCC 35089 / DSM 1224 / JCM 13029 / OCM 148 / SB).